The sequence spans 467 residues: Ankyrin repeat and SOCS box protein 10 (467 aa).

ANK repeat units lie at residues 115 to 144, 147 to 176, 180 to 209, 214 to 243, 247 to 289, 293 to 322, and 326 to 361; these read ELTT…RPDS, GGRT…DPNI, DGKR…RVDG, EEET…CPDA, EGWT…DADA, DKQR…SANT, and GGHT…AVRV. An SOCS box domain is found at 412–464; that stretch reads YSSLFALVRQPRSLQHLSRCALRSHLEGSLPQALPRLPLPPRLLRYLQLDFEG.

Belongs to the ankyrin SOCS box (ASB) family. In terms of tissue distribution, expressed in the eye. The highest expression is observed in the iris, with moderate levels in the trabecular meshwork (TM), the lamina, and the optic nerve; slightly lower levels in the ciliary body, retina, and choroid; and very low levels in the lens.

The protein localises to the cytoplasm. It localises to the nucleus. It participates in protein modification; protein ubiquitination. In terms of biological role, may be a substrate-recognition component of a SCF-like ECS (Elongin-Cullin-SOCS-box protein) E3 ubiquitin-protein ligase complex which mediates the ubiquitination and subsequent proteasomal degradation of target proteins. This Homo sapiens (Human) protein is Ankyrin repeat and SOCS box protein 10 (ASB10).